A 289-amino-acid chain; its full sequence is Protein FraH (289 aa).

The DZANK-type zinc finger occupies 4 to 49; that stretch reads CPNCNHPNPDGAVQCEACYTPLPATSNCPNCGATVQSDAAFCGQCG. The segment at 18–48 is a zinc-finger region; the sequence is CEACYTPLPATSNCPNCGATVQSDAAFCGQC. The FHA domain maps to 204-260; it reads VHIGKPNDRIPPDVDVSGFANSEIVSRVHADIRLEGDAHYIEDVGSSNGTYINNLPL.

Functionally, putative heterocyst to vegetative cell connection. The sequence is that of Protein FraH (fraH) from Nostoc sp. (strain PCC 7120 / SAG 25.82 / UTEX 2576).